The primary structure comprises 644 residues: MEAVVNSDVFLTSNAGLKSSYTNQTLSLVDEDHIHTSDKSLSCSVCNSLSQIVDDDFISAGARNQRTKPKRTGNDQSQQPIKKDCMVSIDEVASTHDWSTRLRNDGNAIAKYLTTNKYDTSNFTIQDMLNIMNKLNIVRTNRNELFQLLSHVKSTLNNASVSVKCTHPLVLIHSRASPRIGDQLKELDKIYSPSNHHILLSTTRFQSMHFTDMSSSQDLSFIYRKPETNYYIHPILMALFGIKLPALENAYVHGDTYSLIQQLYEFRRVKSYNYMLLVNRLTEDNPIVITGVSDLISTEIQRANIHTMIRKAIMNIRMGIFYCNDDDAVDPHLMKIIHTGCSQVMTDEEQILASILSIVGFRPTLVSVARPMNGISYDMKLQAAPYIVVNPMKMITTSDSPISINSKDIYSMAFDGNSGRVVFAPPNIGYGRCSGVTHIDPLGTNVMGSAVHSPVIVNGAMMFYVERRQNKNMFGGECYTGFRSLIDDTPIDVSPEIMLNGIMYRLKSAVCYKLGDQFFDCGSSDIFLKGHYTILFTENGPWMYDPLSVFNPGARNARLMRALKNQYKKLSMDSDDGFYEWLNGDGSVFAASKQQMLMNHVANFDDDLLTMEEAMSMISRHCCILIYAQDYDQYISARHITELF.

A propeptide spanning residues 1-61 is cleaved from the precursor; the sequence is MEAVVNSDVF…IVDDDFISAG (61 aa). The disordered stretch occupies residues 60-81; that stretch reads AGARNQRTKPKRTGNDQSQQPI.

Belongs to the orthopoxvirus OPG129 family. In terms of processing, the 73-kDa precursor is cleaved to a mature protein of 60 kDa during virion maturation. Proteolytic cleavage of major core proteins OPG129, OPG136, and OPG098, which occurs at a late stage of core formation, is required for production of infectious mature virions (MV).

It localises to the virion. Functionally, major component of the virion core that undergoes proteolytic processing during the immature virion (IV) to mature virion (MV) transition. Essential for the formation of a structurally normal core. The chain is Major core protein OPG129 (OPG129) from Monkeypox virus.